The sequence spans 120 residues: V-type proton ATPase subunit F (120 aa).

It belongs to the V-ATPase F subunit family. As to quaternary structure, V-ATPase is a heteromultimeric enzyme composed of a peripheral catalytic V1 complex (components A to H) attached to an integral membrane V0 proton pore complex (components: a, c, c', c'' and d).

Functionally, subunit of the peripheral V1 complex of vacuolar ATPase essential for assembly or catalytic function. V-ATPase is responsible for acidifying a variety of intracellular compartments in eukaryotic cells. This chain is V-type proton ATPase subunit F (vatF), found in Dictyostelium discoideum (Social amoeba).